Consider the following 111-residue polypeptide: Phosphoribosyl-ATP pyrophosphatase (111 aa).

This sequence belongs to the PRA-PH family.

Its subcellular location is the cytoplasm. The enzyme catalyses 1-(5-phospho-beta-D-ribosyl)-ATP + H2O = 1-(5-phospho-beta-D-ribosyl)-5'-AMP + diphosphate + H(+). Its pathway is amino-acid biosynthesis; L-histidine biosynthesis; L-histidine from 5-phospho-alpha-D-ribose 1-diphosphate: step 2/9. The sequence is that of Phosphoribosyl-ATP pyrophosphatase from Azotobacter vinelandii (strain DJ / ATCC BAA-1303).